The chain runs to 142 residues: Cytochrome b5-related protein (142 aa).

The Cytochrome b5 heme-binding domain occupies 16-100; it reads PTYRNSAPVT…IAKYKVRDAY (85 aa). Heme is bound by residues H59 and H82.

It belongs to the cytochrome b5 family.

In terms of biological role, may play a role in muscle cell metabolism. This is Cytochrome b5-related protein (Cyt-b5-r) from Drosophila virilis (Fruit fly).